The primary structure comprises 119 residues: Ergochrome gene cluster protein CPUR_05426 (119 aa).

It participates in pigment biosynthesis. Functionally, part of the ergochrome gene cluster responsible for the typical purple-black color of the ergot sclerotia. The ergochrome gene cluster produces several ergot pigments including the yellow ergochrome secalonic acid and its derivatives, as well as the red anthraquinones endocrocin and clavorubin. The pathway begins with the synthesis of atrochrysone thioester by the polyketide synthase (PKS) CPUR_05437. The atrochrysone carboxyl ACP thioesterase CPUR_05436 then breaks the thioester bond and releases the atrochrysone carboxylic acid from CPUR_05437. The atrochrysone carboxylic acid is then converted to atrochrysone which is further transformed into emodin anthrone. The next step is performed by the anthrone oxygenase CPUR_05434 that catalyzes the oxidation of emodinanthrone to emodin. Emodin is further modified to yield monodictyphenone via several steps involving CPUR_05427, CPUR_05428, CPUR_05429 and CPUR_05430. The short chain dehydrogenase/reductase CPUR_05418 then catalyzes the C-5 ketoreduction to give the xanthone skeleton of the monomeric units. Ergochromes formation requires further dimerization steps of different xanthone units, probably catalyzed by the cytochrome P450 monooxygenase CPUR_05419. CPUR_05425, CPUR_05426 and CPUR_05431 are unique to Claviceps, thus it is likely that they are involved in further modification of xanthone units or in their dimerization. The yellow ergochromes and the red anthraquinone pigments endocrocin and clavorubin are products from the same PKS derived precursors and the latter are likely shunt products in the pathway of xanthone biosynthesis. It is proposed that atrochrysone carboxylic acid released from the PKS CPUR_05437 can also be converted to endocrocin anthrone which is further oxidized into endocrocin by CPUR_05435. Endocrocin could be then modified to clavorubin, possibly by CPUR_05423 and CPUR_05431. Clavorubin is the principal anthraquinone metabolite produced by the cluster with a much higher yield compared to endocrocin. This chain is Ergochrome gene cluster protein CPUR_05426, found in Claviceps purpurea (strain 20.1) (Ergot fungus).